We begin with the raw amino-acid sequence, 148 residues long: Deoxyuridine 5'-triphosphate nucleotidohydrolase (148 aa).

Substrate is bound by residues Arg67–Gly69, Asn80, Leu84–Asp86, and Met94.

Belongs to the dUTPase family. It depends on Mg(2+) as a cofactor.

It catalyses the reaction dUTP + H2O = dUMP + diphosphate + H(+). Its pathway is pyrimidine metabolism; dUMP biosynthesis; dUMP from dCTP (dUTP route): step 2/2. Its function is as follows. This enzyme is involved in nucleotide metabolism: it produces dUMP, the immediate precursor of thymidine nucleotides and it decreases the intracellular concentration of dUTP so that uracil cannot be incorporated into DNA. This chain is Deoxyuridine 5'-triphosphate nucleotidohydrolase, found in Paraburkholderia xenovorans (strain LB400).